A 337-amino-acid polypeptide reads, in one-letter code: Prenyltransferase terC (337 aa).

Mg(2+) contacts are provided by Asp-111 and Asp-115.

The protein belongs to the FPP/GGPP synthase family. Mg(2+) is required as a cofactor.

The protein operates within secondary metabolite biosynthesis. Functionally, prenyltransferase; part of the gene cluster that mediates the biosynthesis of terpendoles, indole-diterpene (IDT) mycotoxins including terpendole I, terpendole K, terpendole C, as well as the kinesin Eg5 inhibitor terpendole E. Terpendoles biosynthesis begins with the synthesis of geranylgeranyl diphosphate (GGPP) by a yet unidentified GGPP synthase. Condensation of indole-3-glycerol phosphate with GGPP by the prenyltransferase terC then forms 3-geranylgeranylindole (3-GGI), followed by epoxidation and cyclization of this intermediate (by the FAD-dependent monooxygeanse terM and the terpene cyclase terB) to form paspaline. The cytochrome monooxygenase terQ then hydroxylates paspalline at C-11 to yield terpendole E. The cytochrome monooxygenase terP converts terpendole E to 13-desoxyterpendole I, and terQ converts 13-desoxyterpendole I into terpendole I. TerF and terK are required for conversion of terpendole I to terpendole C which is further converted to terpendole K. The sequence is that of Prenyltransferase terC from Tolypocladium album (Soil fungus).